The chain runs to 142 residues: Large ribosomal subunit protein uL13 (142 aa).

Belongs to the universal ribosomal protein uL13 family. As to quaternary structure, part of the 50S ribosomal subunit.

Functionally, this protein is one of the early assembly proteins of the 50S ribosomal subunit, although it is not seen to bind rRNA by itself. It is important during the early stages of 50S assembly. The sequence is that of Large ribosomal subunit protein uL13 from Pseudomonas fluorescens (strain ATCC BAA-477 / NRRL B-23932 / Pf-5).